The primary structure comprises 122 residues: Small ribosomal subunit protein bS6 (122 aa).

The disordered stretch occupies residues 99–122; sequence PSPMMKEVAREEAKKAAAQTEQAA.

It belongs to the bacterial ribosomal protein bS6 family.

In terms of biological role, binds together with bS18 to 16S ribosomal RNA. In Ralstonia pickettii (strain 12J), this protein is Small ribosomal subunit protein bS6.